A 589-amino-acid polypeptide reads, in one-letter code: MNWQTELNNSLNWILTALFWVVLCFSVTMLALKQTTFGKKFWCIVSPSMDKKTSIKLILMLLVLFIMILLEVRFSVLNSFFYNGLYSSMQELNIEKFWFFAKLNALLVVAQVIHAIADYFFQQVFEIRWLESFNATLVKRWLNKKKYYRLKYERDLPDNIDQRIEQDAREFITSTVQIVRGVINSVLTTIEFTIILWSLSGVLTLFGFNIEKGVVFFIYAFIIFATLMSVWIGRPLIKLNFTKEKLNGDYRYSLIRVRDNAESIAFYNGEPKEQTFLQHQFRQIIHNRWSIVLKMLGLNSFNSGVTRVAKLLPLMLQAPRFFSGQIKLGDMHQTVQAFNRLMTALSFFRLFYEQFTLYQARLNRLYGFITKMDELDKQNVHHPFHCSHRVALKNFGIKDEQGHVLLNNLNINLENGDALLIQGASGTGKTSLLKAIAGIYPFETIGIAEHPCMGSLFLPQRPYMPQGTLREAICYPNINPSHAELEQTMKDCALGKYIHALNVKNDWQAILSPGELQRVAFIRILLTKPDVVFLDETTSALDETTENLLYQTIKERLPEMIILSVGHRSTLQQFHNKQLKLDVCLLCEN.

5 helical membrane-spanning segments follow: residues 11-31, 57-77, 97-117, 190-210, and 213-233; these read LNWILTALFWVVLCFSVTMLA, LILMLLVLFIMILLEVRFSVL, FWFFAKLNALLVVAQVIHAIA, IEFTIILWSLSGVLTLFGFNI, and GVVFFIYAFIIFATLMSVWIG. In terms of domain architecture, ABC transmembrane type-1 spans 57–357; sequence LILMLLVLFI…FRLFYEQFTL (301 aa). One can recognise an ABC transporter domain in the interval 390–587; the sequence is VALKNFGIKD…QLKLDVCLLC (198 aa). An ATP-binding site is contributed by 423-430; it reads GASGTGKT.

The protein belongs to the ABC transporter superfamily.

The protein localises to the cell inner membrane. This is an uncharacterized protein from Haemophilus influenzae (strain ATCC 51907 / DSM 11121 / KW20 / Rd).